We begin with the raw amino-acid sequence, 131 residues long: Large ribosomal subunit protein bL17 (131 aa).

The protein belongs to the bacterial ribosomal protein bL17 family. As to quaternary structure, part of the 50S ribosomal subunit. Contacts protein L32.

This is Large ribosomal subunit protein bL17 from Finegoldia magna (strain ATCC 29328 / DSM 20472 / WAL 2508) (Peptostreptococcus magnus).